The chain runs to 398 residues: Serpin-Z1A (398 aa).

The tract at residues 343–367 (GTEAAASTAIKMVLQQARPPSVMDF) is RCL.

The protein belongs to the serpin family.

Functionally, inhibits chymotrypsin and cathepsin G in vitro. The sequence is that of Serpin-Z1A (WZCI) from Triticum aestivum (Wheat).